Here is a 466-residue protein sequence, read N- to C-terminus: Neuraminidase (466 aa).

Over 1–11 (MLPSTIQTLTL) the chain is Intravirion. A helical membrane pass occupies residues 12–34 (FLTSGGVLLSLYVSASLSYLLYS). An involved in apical transport and lipid raft association region spans residues 13 to 35 (LTSGGVLLSLYVSASLSYLLYSD). The Virion surface segment spans residues 35–466 (DILLKFSPTK…DTVTGVDMAL (432 aa)). A hypervariable stalk region region spans residues 38 to 86 (LKFSPTKRTAPTMSLECVNVSNAQAVNHSATKEMTFLLPEPEWTYPRLS). Asparagine 56 and asparagine 64 each carry an N-linked (GlcNAc...) asparagine; by host glycan. 8 disulfides stabilise this stretch: cysteine 87/cysteine 420, cysteine 122/cysteine 127, cysteine 182/cysteine 229, cysteine 231/cysteine 236, cysteine 277/cysteine 291, cysteine 279/cysteine 289, cysteine 318/cysteine 337, and cysteine 424/cysteine 447. Residues 89–466 (GSTFQKALLI…DTVTGVDMAL (378 aa)) are head of neuraminidase. Arginine 116 contributes to the substrate binding site. N-linked (GlcNAc...) asparagine; by host glycosylation occurs at asparagine 144. The Proton donor/acceptor role is filled by aspartate 149. Arginine 150 is a substrate binding site. 275-276 (EE) contributes to the substrate binding site. Asparagine 284 is a glycosylation site (N-linked (GlcNAc...) asparagine; by host). Arginine 292 lines the substrate pocket. Residues aspartate 293 and aspartate 324 each coordinate Ca(2+). Arginine 374 is a binding site for substrate. Tyrosine 409 acts as the Nucleophile in catalysis.

It belongs to the glycosyl hydrolase 34 family. Homotetramer. Ca(2+) serves as cofactor. In terms of processing, N-glycosylated.

It localises to the virion membrane. The protein resides in the host apical cell membrane. It carries out the reaction Hydrolysis of alpha-(2-&gt;3)-, alpha-(2-&gt;6)-, alpha-(2-&gt;8)- glycosidic linkages of terminal sialic acid residues in oligosaccharides, glycoproteins, glycolipids, colominic acid and synthetic substrates.. Its activity is regulated as follows. Inhibited by the neuraminidase inhibitors zanamivir (Relenza) and oseltamivir (Tamiflu). These drugs interfere with the release of progeny virus from infected cells and are effective against all influenza strains. Resistance to neuraminidase inhibitors is quite rare. In terms of biological role, catalyzes the removal of terminal sialic acid residues from viral and cellular glycoconjugates. Cleaves off the terminal sialic acids on the glycosylated HA during virus budding to facilitate virus release. Additionally helps virus spread through the circulation by further removing sialic acids from the cell surface. These cleavages prevent self-aggregation and ensure the efficient spread of the progeny virus from cell to cell. Otherwise, infection would be limited to one round of replication. Described as a receptor-destroying enzyme because it cleaves a terminal sialic acid from the cellular receptors. May facilitate viral invasion of the upper airways by cleaving the sialic acid moieties on the mucin of the airway epithelial cells. Likely to plays a role in the budding process through its association with lipid rafts during intracellular transport. May additionally display a raft-association independent effect on budding. Plays a role in the determination of host range restriction on replication and virulence. Sialidase activity in late endosome/lysosome traffic seems to enhance virus replication. The polypeptide is Neuraminidase (Influenza B virus (strain B/Maryland/1959)).